Reading from the N-terminus, the 254-residue chain is 3-deoxy-manno-octulosonate cytidylyltransferase (254 aa).

It belongs to the KdsB family.

It localises to the cytoplasm. It carries out the reaction 3-deoxy-alpha-D-manno-oct-2-ulosonate + CTP = CMP-3-deoxy-beta-D-manno-octulosonate + diphosphate. It participates in nucleotide-sugar biosynthesis; CMP-3-deoxy-D-manno-octulosonate biosynthesis; CMP-3-deoxy-D-manno-octulosonate from 3-deoxy-D-manno-octulosonate and CTP: step 1/1. The protein operates within bacterial outer membrane biogenesis; lipopolysaccharide biosynthesis. Its function is as follows. Activates KDO (a required 8-carbon sugar) for incorporation into bacterial lipopolysaccharide in Gram-negative bacteria. The sequence is that of 3-deoxy-manno-octulosonate cytidylyltransferase from Ectopseudomonas mendocina (strain ymp) (Pseudomonas mendocina).